A 321-amino-acid polypeptide reads, in one-letter code: Peptidase 1 (321 aa).

Residues 1–18 (MKIILAIASLLVLSAVYA) form the signal peptide. A propeptide spanning residues 19 to 98 (RPASIKTFEE…LKTQFDLNAE (80 aa)) is cleaved from the precursor. N-linked (GlcNAc...) asparagine glycosylation is present at asparagine 34. The cysteines at positions 130 and 170 are disulfide-linked. The active site involves cysteine 133. N-linked (GlcNAc...) asparagine glycosylation is present at asparagine 151. Catalysis depends on residues histidine 269 and asparagine 289.

Belongs to the peptidase C1 family.

The protein resides in the secreted. It carries out the reaction Broad endopeptidase specificity.. Functionally, probable thiol protease. In Euroglyphus maynei (Mayne's house dust mite), this protein is Peptidase 1 (EURM1).